We begin with the raw amino-acid sequence, 206 residues long: Proteasome subunit beta 1 (206 aa).

Residues Met-1–Gly-14 constitute a propeptide, removed in mature form; by autocatalysis. The active-site Nucleophile is Thr-15.

This sequence belongs to the peptidase T1B family. As to quaternary structure, the 20S proteasome core is composed of 14 alpha and 14 beta subunits that assemble into four stacked heptameric rings, resulting in a barrel-shaped structure. The two inner rings, each composed of seven catalytic beta subunits, are sandwiched by two outer rings, each composed of seven alpha subunits. The catalytic chamber with the active sites is on the inside of the barrel. Has a gated structure, the ends of the cylinder being occluded by the N-termini of the alpha-subunits. Is capped at one or both ends by the proteasome regulatory ATPase, PAN.

The protein localises to the cytoplasm. It catalyses the reaction Cleavage of peptide bonds with very broad specificity.. With respect to regulation, the formation of the proteasomal ATPase PAN-20S proteasome complex, via the docking of the C-termini of PAN into the intersubunit pockets in the alpha-rings, triggers opening of the gate for substrate entry. Interconversion between the open-gate and close-gate conformations leads to a dynamic regulation of the 20S proteasome proteolysis activity. In terms of biological role, component of the proteasome core, a large protease complex with broad specificity involved in protein degradation. The chain is Proteasome subunit beta 1 from Caldivirga maquilingensis (strain ATCC 700844 / DSM 13496 / JCM 10307 / IC-167).